A 144-amino-acid polypeptide reads, in one-letter code: uncharacterized protein (144 aa).

In terms of domain architecture, N-acetyltransferase spans I2–L144.

This sequence belongs to the acetyltransferase family.

It is found in the cytoplasm. Its subcellular location is the nucleus. This is an uncharacterized protein from Schizosaccharomyces pombe (strain 972 / ATCC 24843) (Fission yeast).